Reading from the N-terminus, the 538-residue chain is Putative outer membrane porin BglH (538 aa).

Positions 1–25 (MFRRNIITSAILLMAPLAFSAQSLA) are cleaved as a signal peptide.

It belongs to the porin LamB (TC 1.B.3) family.

Its subcellular location is the cell outer membrane. Its function is as follows. May be a sugar porin with a broad carbohydrate specificity. The sequence is that of Putative outer membrane porin BglH (bglH) from Escherichia coli O6:H1 (strain CFT073 / ATCC 700928 / UPEC).